Here is a 223-residue protein sequence, read N- to C-terminus: 7-cyano-7-deazaguanine synthase (223 aa).

8–18 serves as a coordination point for ATP; sequence LSGGLDSATTL. Residues Cys-187, Cys-197, Cys-200, and Cys-203 each contribute to the Zn(2+) site.

The protein belongs to the QueC family. Zn(2+) serves as cofactor.

It catalyses the reaction 7-carboxy-7-deazaguanine + NH4(+) + ATP = 7-cyano-7-deazaguanine + ADP + phosphate + H2O + H(+). Its pathway is purine metabolism; 7-cyano-7-deazaguanine biosynthesis. Its function is as follows. Catalyzes the ATP-dependent conversion of 7-carboxy-7-deazaguanine (CDG) to 7-cyano-7-deazaguanine (preQ(0)). This Methylococcus capsulatus (strain ATCC 33009 / NCIMB 11132 / Bath) protein is 7-cyano-7-deazaguanine synthase.